A 153-amino-acid chain; its full sequence is 6,7-dimethyl-8-ribityllumazine synthase (153 aa).

5-amino-6-(D-ribitylamino)uracil contacts are provided by residues F22, 56–58 (AFE), and 80–82 (AVI). 85–86 (ST) contributes to the (2S)-2-hydroxy-3-oxobutyl phosphate binding site. H88 serves as the catalytic Proton donor. F113 contacts 5-amino-6-(D-ribitylamino)uracil. R127 is a binding site for (2S)-2-hydroxy-3-oxobutyl phosphate.

Belongs to the DMRL synthase family.

The catalysed reaction is (2S)-2-hydroxy-3-oxobutyl phosphate + 5-amino-6-(D-ribitylamino)uracil = 6,7-dimethyl-8-(1-D-ribityl)lumazine + phosphate + 2 H2O + H(+). It participates in cofactor biosynthesis; riboflavin biosynthesis; riboflavin from 2-hydroxy-3-oxobutyl phosphate and 5-amino-6-(D-ribitylamino)uracil: step 1/2. Functionally, catalyzes the formation of 6,7-dimethyl-8-ribityllumazine by condensation of 5-amino-6-(D-ribitylamino)uracil with 3,4-dihydroxy-2-butanone 4-phosphate. This is the penultimate step in the biosynthesis of riboflavin. The chain is 6,7-dimethyl-8-ribityllumazine synthase from Fusobacterium nucleatum subsp. nucleatum (strain ATCC 25586 / DSM 15643 / BCRC 10681 / CIP 101130 / JCM 8532 / KCTC 2640 / LMG 13131 / VPI 4355).